Here is a 330-residue protein sequence, read N- to C-terminus: Diacylglycerol kinase (330 aa).

The DAGKc domain maps to 1-132; it reads MRKCARIIYN…VDIGKMNNRY (132 aa). Residues 10–14, T41, 67–73, and T94 contribute to the ATP site; these read NPTSG and GDGTLNE. Mg(2+) contacts are provided by K213, D216, and H218. E273 functions as the Proton acceptor in the catalytic mechanism.

It belongs to the diacylglycerol/lipid kinase family. In terms of assembly, homodimer. Requires Mg(2+) as cofactor.

The enzyme catalyses a 1,2-diacyl-sn-glycerol + ATP = a 1,2-diacyl-sn-glycero-3-phosphate + ADP + H(+). Its function is as follows. Catalyzes the phosphorylation of diacylglycerol (DAG) into phosphatidic acid. Is a key enzyme involved in the production of lipoteichoic acid by reintroducing DAG formed from the breakdown of membrane phospholipids into the phosphatidylglycerol biosynthetic pathway. In Staphylococcus haemolyticus (strain JCSC1435), this protein is Diacylglycerol kinase (dagK).